Reading from the N-terminus, the 767-residue chain is Cilia- and flagella-associated protein 91 (767 aa).

Residues 1-29 (MSHAVTIQEPQAQPQVSQTRYRERSRAGS) form a disordered region. Residues 8–19 (QEPQAQPQVSQT) show a composition bias toward polar residues.

It belongs to the CFAP91 family. Part of a complex containing MYCBP, AKAP1 and PRKAR2B. Interacts with MYCBP and AKAP1. Interacts with CFAP61. Post-translationally, phosphorylated by PKA.

It localises to the cytoplasm. It is found in the mitochondrion. The protein resides in the cytoskeleton. The protein localises to the cilium axoneme. Involved in sperm flagellum axonemal organization and function. May regulate cilium motility through its role in the assembly of the axonemal radial spokes. The polypeptide is Cilia- and flagella-associated protein 91 (CFAP91) (Macaca fascicularis (Crab-eating macaque)).